A 245-amino-acid chain; its full sequence is UPF0246 protein Ldb2075 (245 aa).

It belongs to the UPF0246 family.

The chain is UPF0246 protein Ldb2075 from Lactobacillus delbrueckii subsp. bulgaricus (strain ATCC 11842 / DSM 20081 / BCRC 10696 / JCM 1002 / NBRC 13953 / NCIMB 11778 / NCTC 12712 / WDCM 00102 / Lb 14).